The chain runs to 505 residues: Alpha-1-syntrophin (505 aa).

Disordered regions lie at residues 1–25 (MASGRRAPRTGLLELRAGAGSGAGG) and 40–77 (LTVSPADGDPGPEPGAPREQEPAQLNGAAEPGAGPPQL). PH domains are found at residues 6–269 (RAPR…AQVN) and 293–401 (DIKQ…DGCH). The PDZ domain maps to 87–170 (RVTVRKADAG…EVVLEVKYMK (84 aa)). Ser101, Ser184, Ser189, Ser193, and Ser200 each carry phosphoserine. Positions 180–210 (TGGTSVGWDSPPASPLQRQPSSPGPTPRNFS) are disordered. Positions 449–505 (PFEKLQMSSDDGASLLFLDFGGAEGEIQLDLHSCPKTIVFIIHSFLSAKVTRLGLLA) constitute an SU domain. The interval 483–505 (PKTIVFIIHSFLSAKVTRLGLLA) is calmodulin-binding.

It belongs to the syntrophin family. As to quaternary structure, monomer and homodimer. Interacts with the other members of the syntrophin family SNTB1 and SNTB2; SGCG and SGCA of the dystrophin glycoprotein complex; NOS1; GRB2; the sodium channel proteins SCN4A and SCN5A; F-actin and calmodulin. Interacts with dystrophin protein DMD and related proteins DTNA and UTRN and with MAPK12, TGFA and GA. Interacts with MYOC; regulates muscle hypertrophy. Interacts with DTNB. In terms of processing, phosphorylated by CaM-kinase II. Phosphorylation may inhibit the interaction with DMD. High expression in skeletal muscle and heart. Low expression in brain, pancreas, liver, kidney and lung. Not detected in placenta.

The protein localises to the cell membrane. The protein resides in the sarcolemma. It is found in the cell junction. Its subcellular location is the cytoplasm. It localises to the cytoskeleton. Its function is as follows. Adapter protein that binds to and probably organizes the subcellular localization of a variety of membrane proteins. May link various receptors to the actin cytoskeleton and the extracellular matrix via the dystrophin glycoprotein complex. Plays an important role in synapse formation and in the organization of UTRN and acetylcholine receptors at the neuromuscular synapse. Binds to phosphatidylinositol 4,5-bisphosphate. This chain is Alpha-1-syntrophin (SNTA1), found in Homo sapiens (Human).